We begin with the raw amino-acid sequence, 368 residues long: Histidinol-phosphate aminotransferase 1 (368 aa).

Lysine 224 carries the post-translational modification N6-(pyridoxal phosphate)lysine.

Belongs to the class-II pyridoxal-phosphate-dependent aminotransferase family. Histidinol-phosphate aminotransferase subfamily. In terms of assembly, homodimer. Pyridoxal 5'-phosphate is required as a cofactor.

The enzyme catalyses L-histidinol phosphate + 2-oxoglutarate = 3-(imidazol-4-yl)-2-oxopropyl phosphate + L-glutamate. It functions in the pathway amino-acid biosynthesis; L-histidine biosynthesis; L-histidine from 5-phospho-alpha-D-ribose 1-diphosphate: step 7/9. In Rhizobium meliloti (strain 1021) (Ensifer meliloti), this protein is Histidinol-phosphate aminotransferase 1 (hisC1).